The chain runs to 105 residues: ATPase inhibitor A, mitochondrial (105 aa).

A disordered region spans residues 17–52; sequence MSSDQLGELGTGAGKGGGGGGSVRAAGGSFGRREAA. The N-terminal inhibitory region stretch occupies residues 22-51; sequence LGELGTGAGKGGGGGGSVRAAGGSFGRREA. The span at 25–38 shows a compositional bias: gly residues; the sequence is LGTGAGKGGGGGGS. Positions 58 to 105 form a coiled coil; sequence FRQKEREQLAALKNHHEEEIDHHKKEIERLQREIDRHKGKIRKLKHDD. The tract at residues 73 to 105 is antiparallel alpha-helical coiled coil region; sequence HEEEIDHHKKEIERLQREIDRHKGKIRKLKHDD.

The protein belongs to the ATPase inhibitor family. Homodimer; represents the active form and is present at a pH value below 6.5. Homotetramer; represents the inactive form and is present at a pH value above 7.0.

The protein resides in the mitochondrion. Endogenous F(1)F(o)-ATPase inhibitor limiting ATP depletion when the mitochondrial membrane potential falls below a threshold and the F(1)F(o)-ATP synthase starts hydrolyzing ATP to pump protons out of the mitochondrial matrix. Required to avoid the consumption of cellular ATP when the F(1)F(o)-ATP synthase enzyme acts as an ATP hydrolase. Indirectly acts as a regulator of heme synthesis in erythroid tissues: regulates heme synthesis by modulating the mitochondrial pH and redox potential, allowing fech to efficiently catalyze the incorporation of iron into protoporphyrin IX to produce heme. This is ATPase inhibitor A, mitochondrial from Danio rerio (Zebrafish).